A 4499-amino-acid polypeptide reads, in one-letter code: Dynein alpha chain, flagellar outer arm (4499 aa).

The stem stretch occupies residues 1–1677 (MSIFWEVPNA…RIRICDASFP (1677 aa)). Kelch repeat units lie at residues 29–84 (RFVL…ALDD), 86–135 (RLLV…RFGS), 137–183 (VFIF…RFDH), 199–245 (KLLI…VCDG), 253–304 (KVFS…FDVK), and 307–358 (SLLI…IRGL). Residues 425-534 (FANTAARNCI…IRGSPFTVKC (110 aa)) form a Filamin repeat. Kelch repeat units follow at residues 562–608 (ELVL…VLSD) and 610–661 (ELVV…AVSA). The interval 653 to 720 (PKGAAAVSAE…SRPVSAKPAP (68 aa)) is disordered. Residues 655 to 689 (GAAAVSAEPSAEPAAEPAAEPAAEPDADAPAAEPA) are compositionally biased toward low complexity. Over residues 690 to 705 (AEGEEGAVPAEGEEGA) the composition is skewed to acidic residues. 2 Kelch repeats span residues 750-801 (LYVM…ATGN) and 864-913 (KLFL…TLSG). 2 coiled-coil regions span residues 1261–1334 (ELHK…MIAN) and 1382–1450 (KKEL…RRAF). AAA regions lie at residues 1678–1921 (YGYE…VLVV) and 1981–2225 (DVIV…KSYS). ATP contacts are provided by residues 1716-1723 (GPAGTGKT) and 2019-2026 (GPTGTGRT). Residues 2269–2317 (MIWAFGGGLVEKDGIPYRRNFDKWFKQTWTTVKIPGKGTVYDYFVNPKT) form a Kelch 11 repeat. 2 AAA regions span residues 2331-2577 (DYDG…VFQG) and 2679-2928 (EYNE…ERRY). ATP is bound at residue 2369–2376 (GGAGVGKT). Positions 2655 to 2688 (LADKAYDEVADYTSLYKTLTEALNEYNETNAAMD) form a coiled coil. 2717-2724 (GVGGSGKQ) serves as a coordination point for ATP. A coiled-coil region spans residues 3003-3023 (VGVEKEKVNAENAAAQVEAEK). The interval 3003–3262 (VGVEKEKVNA…ERWALTVEQL (260 aa)) is stalk. Residues 3070–3117 (LKKPPPGVDDITAVVIILLENNPKDKSWQAAQKLMNNVDKFLERVKSF) form a Kelch 12 repeat. 2 coiled-coil regions span residues 3170–3262 (DVVQ…VEQL) and 3486–3515 (NKERPDLEETKTQLIIQNTEFTIKLKELED). The tract at residues 3320–3550 (LVDDALVAGW…AKRVSTEISE (231 aa)) is AAA 5. Residues 3614–3687 (GRKKGKGLKK…VGDAEDEDDE (74 aa)) form a disordered region. The span at 3630–3653 (QPMDHQSLMEKARRSSGVGDRRPS) shows a compositional bias: basic and acidic residues. An AAA 6 region spans residues 3843 to 4082 (LQNFCEHMMG…LTTCGDVLYN (240 aa)).

Belongs to the dynein heavy chain family. As to quaternary structure, consists of at least 3 heavy chains (alpha, beta and gamma), 2 intermediate chains and 8 light chains.

The protein localises to the cell projection. It localises to the cilium. The protein resides in the flagellum. It is found in the cytoplasm. Its subcellular location is the cytoskeleton. The protein localises to the flagellum axoneme. Its function is as follows. Force generating protein of eukaryotic cilia and flagella. Produces force towards the minus ends of microtubules. Dynein has ATPase activity; the force-producing power stroke is thought to occur on release of ADP. This is Dynein alpha chain, flagellar outer arm (ODA11) from Chlamydomonas reinhardtii (Chlamydomonas smithii).